The primary structure comprises 621 residues: Laccase-2 (621 aa).

Positions 1–23 are cleaved as a signal peptide; sequence MMKSFFSAAALLLGLVAPSAVLA. Residues 24 to 48 constitute a propeptide that is removed on maturation; that stretch reads APSLPGVPREVTRDLLRPVEERQSS. Residues cysteine 49 and cysteine 57 are joined by a disulfide bond. Plastocyanin-like domains follow at residues 78 to 201 and 210 to 367; these read TRTY…IVVN and IDLG…LPTN. Residue asparagine 133 is glycosylated (N-linked (GlcNAc...) asparagine). Cu cation-binding residues include histidine 138, histidine 140, histidine 183, and histidine 185. 2 cysteine pairs are disulfide-bonded: cysteine 159–cysteine 586 and cysteine 343–cysteine 377. Asparagine 261, asparagine 276, asparagine 289, asparagine 325, and asparagine 334 each carry an N-linked (GlcNAc...) asparagine glycan. Asparagine 401, asparagine 421, and asparagine 441 each carry an N-linked (GlcNAc...) asparagine glycan. The region spanning 430-566 is the Plastocyanin-like 3 domain; the sequence is DKPIVDYVIA…GGLSVQYLER (137 aa). Cu cation contacts are provided by histidine 476, histidine 479, histidine 481, histidine 548, cysteine 549, histidine 550, and histidine 554. Positions 606-621 are excised as a propeptide; sequence KVKKWVGEHPDWYIKN.

The protein belongs to the multicopper oxidase family. Monomer. Cu cation serves as cofactor. Proteolytically processed at both its N-terminus and its C-terminus.

It localises to the secreted. The catalysed reaction is 4 hydroquinone + O2 = 4 benzosemiquinone + 2 H2O. In terms of biological role, probably involved in lignin degradation and in the detoxification of lignin-derived products in its natural habitat (herbivorous dung), which is rich in lignin of grasses and straw. Probably involved in melanin synthesis and in perithecia development. The polypeptide is Laccase-2 (LAC2) (Podospora anserina (Pleurage anserina)).